A 232-amino-acid polypeptide reads, in one-letter code: Golgi SNAP receptor complex member 1 (232 aa).

Topologically, residues Met-1–Asp-211 are cytoplasmic. Coiled-coil stretches lie at residues Tyr-6 to Lys-23 and Gly-52 to Leu-80. The helical; Anchor for type IV membrane protein transmembrane segment at Ser-212–Asn-232 threads the bilayer.

It belongs to the GOSR1 family. As to quaternary structure, component of several multiprotein Golgi SNARE complexes.

The protein resides in the golgi apparatus membrane. Involved in transport from the ER to the Golgi apparatus as well as in intra-Golgi transport. It belongs to a super-family of proteins called t-SNAREs or soluble NSF (N-ethylmaleimide-sensitive factor) attachment protein receptor. The polypeptide is Golgi SNAP receptor complex member 1 (Gos28) (Drosophila melanogaster (Fruit fly)).